Here is a 214-residue protein sequence, read N- to C-terminus: Ribosomal RNA large subunit methyltransferase E (214 aa).

Residues Gly-68, Trp-70, Asp-88, Asp-104, and Asp-129 each coordinate S-adenosyl-L-methionine. Lys-169 serves as the catalytic Proton acceptor.

This sequence belongs to the class I-like SAM-binding methyltransferase superfamily. RNA methyltransferase RlmE family.

It is found in the cytoplasm. It carries out the reaction uridine(2552) in 23S rRNA + S-adenosyl-L-methionine = 2'-O-methyluridine(2552) in 23S rRNA + S-adenosyl-L-homocysteine + H(+). Functionally, specifically methylates the uridine in position 2552 of 23S rRNA at the 2'-O position of the ribose in the fully assembled 50S ribosomal subunit. In Magnetococcus marinus (strain ATCC BAA-1437 / JCM 17883 / MC-1), this protein is Ribosomal RNA large subunit methyltransferase E.